Reading from the N-terminus, the 226-residue chain is 3-dehydroquinate dehydratase (226 aa).

3-dehydroquinate-binding positions include 30 to 32 (EWR) and Arg62. His118 serves as the catalytic Proton donor/acceptor. The Schiff-base intermediate with substrate role is filled by Lys143. Residues Arg186, Ser205, and Gln209 each contribute to the 3-dehydroquinate site.

It belongs to the type-I 3-dehydroquinase family. Homodimer.

It carries out the reaction 3-dehydroquinate = 3-dehydroshikimate + H2O. Its pathway is metabolic intermediate biosynthesis; chorismate biosynthesis; chorismate from D-erythrose 4-phosphate and phosphoenolpyruvate: step 3/7. Involved in the third step of the chorismate pathway, which leads to the biosynthesis of aromatic amino acids. Catalyzes the cis-dehydration of 3-dehydroquinate (DHQ) and introduces the first double bond of the aromatic ring to yield 3-dehydroshikimate. The chain is 3-dehydroquinate dehydratase from Streptococcus equi subsp. zooepidemicus (strain H70).